We begin with the raw amino-acid sequence, 477 residues long: Zinc finger C3HC-type protein 1-like (477 aa).

A C3HC-type zinc finger spans residues 95–149 (CAKYGWCNIECDMLKCSSCNAYLCASLQPILDFSKYKQRCVELQEALRKAHEKFC). The tract at residues 287–392 (SLSAPGTPVS…SSSSDTSPRS (106 aa)) is disordered. Over residues 354–363 (SMGQGENTGL) the composition is skewed to polar residues. Residues 370-379 (SPHRRAKRPR) show a composition bias toward basic residues. The span at 382 to 392 (SSSSSDTSPRS) shows a compositional bias: low complexity.

In terms of processing, phosphorylated. May also be weakly phosphorylated on Tyr residues.

Its subcellular location is the nucleus. It is found in the nucleus envelope. Functionally, required for proper positioning of a substantial amount of TPR at the nuclear basket (NB) through interaction with TPR. In Xenopus laevis (African clawed frog), this protein is Zinc finger C3HC-type protein 1-like (zc3hc1).